Consider the following 105-residue polypeptide: Large ribosomal subunit protein uL24 (105 aa).

The protein belongs to the universal ribosomal protein uL24 family. In terms of assembly, part of the 50S ribosomal subunit.

One of two assembly initiator proteins, it binds directly to the 5'-end of the 23S rRNA, where it nucleates assembly of the 50S subunit. Functionally, one of the proteins that surrounds the polypeptide exit tunnel on the outside of the subunit. In Beijerinckia indica subsp. indica (strain ATCC 9039 / DSM 1715 / NCIMB 8712), this protein is Large ribosomal subunit protein uL24.